The primary structure comprises 242 residues: Triosephosphate isomerase (242 aa).

Residue 8–10 participates in substrate binding; that stretch reads NWK. His91 functions as the Electrophile in the catalytic mechanism. Residue Glu155 is the Proton acceptor of the active site. Residues Gly161 and Ser192 each contribute to the substrate site.

The protein belongs to the triosephosphate isomerase family. In terms of assembly, homodimer.

It localises to the cytoplasm. It carries out the reaction D-glyceraldehyde 3-phosphate = dihydroxyacetone phosphate. The protein operates within carbohydrate biosynthesis; gluconeogenesis. Its pathway is carbohydrate degradation; glycolysis; D-glyceraldehyde 3-phosphate from glycerone phosphate: step 1/1. In terms of biological role, involved in the gluconeogenesis. Catalyzes stereospecifically the conversion of dihydroxyacetone phosphate (DHAP) to D-glyceraldehyde-3-phosphate (G3P). This Wolbachia pipientis wMel protein is Triosephosphate isomerase.